The sequence spans 179 residues: Large ribosomal subunit protein uL5 (179 aa).

It belongs to the universal ribosomal protein uL5 family. Part of the 50S ribosomal subunit; part of the 5S rRNA/L5/L18/L25 subcomplex. Contacts the 5S rRNA and the P site tRNA. Forms a bridge to the 30S subunit in the 70S ribosome.

This is one of the proteins that bind and probably mediate the attachment of the 5S RNA into the large ribosomal subunit, where it forms part of the central protuberance. In the 70S ribosome it contacts protein S13 of the 30S subunit (bridge B1b), connecting the 2 subunits; this bridge is implicated in subunit movement. Contacts the P site tRNA; the 5S rRNA and some of its associated proteins might help stabilize positioning of ribosome-bound tRNAs. This chain is Large ribosomal subunit protein uL5, found in Prochlorococcus marinus (strain MIT 9211).